The sequence spans 2131 residues: Nonribosomal peptide synthetase criC (2131 aa).

Residues 13–407 (FSQQCFQHPD…GRRDRVTKIR (395 aa)) form an adenylation 1 region. The 77-residue stretch at 525-601 (SGPLTIDQTI…ALVEKNRHET (77 aa)) folds into the Carrier 1 domain. S562 carries the O-(pantetheine 4'-phosphoryl)serine modification. A disordered region spans residues 598 to 627 (RHETENRPDSSAFATRTPEESSMPTQGPVT). Residues 625–1018 (PVTPLQKRMV…YMSLLDAFLD (394 aa)) form a condensation 1 region. Residues 1069–1447 (ASLHPTHIAV…GRKDRQVKVR (379 aa)) are adenylation 2. A Carrier 2 domain is found at 1569 to 1647 (SSEAHLEKLI…DLITLVAQQQ (79 aa)). S1607 carries the post-translational modification O-(pantetheine 4'-phosphoryl)serine. The segment at 1688 to 2086 (SQSQSTFNVP…EALLLECFRM (399 aa)) is condensation 2.

Belongs to the NRP synthetase family. Pantetheine 4'-phosphate is required as a cofactor.

It catalyses the reaction L-tryptophan + L-alanine + 2 ATP = cyclo(L-tryptophyl-L-alanyl) + 2 ADP + 2 phosphate + 2 H(+). It functions in the pathway secondary metabolite biosynthesis. Its pathway is alkaloid biosynthesis. In terms of biological role, nonribosomal peptide synthetase; part of the gene cluster that mediates the biosynthesis of echinulin family alkaloid. The pathway begins with the biosynthesis of the cyclic dipeptide cyclo-L-Trp-L-Ala (cyclo-TA) by the NRPS criC via condensation of L-alanine and L-tryptophan. The prenyltransferase criA then catalyzes the first prenylation step, a reverse prenylation reaction at C2, to yield preechinulin. Preechinulin is the substrate of the cytochrome P450 monooxygenase criE that catalyzes the formation of the double bond between C10 and C11 to produce neoechulin A. The unique prenyltransferase criF functions as a competitive enzyme with criE for preechinulin metabolization and uses preechinulin for effective regiospecific prenylations. Preechinulin is prenylated by criF at C5 or C7. C7-prenylation leads to accumulation of tardioxopiperazine B without further modification by criF. In contrast, the C5-prenylated tardioxopiperazine A can be prenylated again by criF, predominantly at C7 to form echinulin or less frequently at C4 to give variecolorin L. CriF also accepts neoechilunin A to produce varlecolorin G (prenylation at C5) or isoechinulin A (prenylation at C7). CriF further converts isoechinulin A into dehydroechinulin. Moreover, a yet unidentified enzyme can also convert neoechilunin A into neoechilunin B by introducing a double bond between positions C14 and C17 and thus provides a further substrate to criF for C5 and C7 prenylation. This Aspergillus cristatus (Chinese Fuzhuan brick tea-fermentation fungus) protein is Nonribosomal peptide synthetase criC.